We begin with the raw amino-acid sequence, 89 residues long: MAISKEKKNEIMAQYARHEGDTGSVEVQVAVLTWEINHLNDHIKQHKKDHATYRGLMKKIGRRRNLLAYLRRTDVNRYRELIHSLGLRR.

The protein belongs to the universal ribosomal protein uS15 family. In terms of assembly, part of the 30S ribosomal subunit. Forms a bridge to the 50S subunit in the 70S ribosome, contacting the 23S rRNA.

One of the primary rRNA binding proteins, it binds directly to 16S rRNA where it helps nucleate assembly of the platform of the 30S subunit by binding and bridging several RNA helices of the 16S rRNA. Functionally, forms an intersubunit bridge (bridge B4) with the 23S rRNA of the 50S subunit in the ribosome. In Streptococcus suis (strain 98HAH33), this protein is Small ribosomal subunit protein uS15.